The sequence spans 378 residues: Putative monoglyceride lipase (378 aa).

A GXSXG motif is present at residues Gly97–Gly101. Ser99 acts as the Nucleophile in catalysis. Active-site charge relay system residues include Asp219 and His249. Residues Pro276–Lys292 are compositionally biased toward basic and acidic residues. The segment at Pro276 to Thr350 is disordered. Residues Pro293–Thr305 show a composition bias toward low complexity. At Ser301 the chain carries Phosphoserine. Residues Thr341–Thr350 show a composition bias toward polar residues.

It belongs to the AB hydrolase superfamily. Monoacylglycerol lipase family.

The protein resides in the lipid droplet. It is found in the cytoplasm. It localises to the endoplasmic reticulum. The protein localises to the mitochondrion outer membrane. It carries out the reaction Hydrolyzes glycerol monoesters of long-chain fatty acids.. Its pathway is glycerolipid metabolism; triacylglycerol degradation. Its function is as follows. Converts monoacylglycerides (MAG) to free fatty acids and glycerol. Has a strong preference for monounsaturated monoglycerides. Required for efficient degradation of MAG, short-lived intermediates of glycerolipid metabolism which may also function as lipid signaling molecules. Controls inactivation of the signaling lipid N-palmitoylethanolamine (PEA). Involved in fatty acid ethyl ester (FAEE) catabolism. FAEEs are non-oxidative metabolites of ethanol that are transiently incorporated into lipid droplets (LDs). Their mobilization by LD-resident FAEE hydrolases facilitates a controlled metabolism of these potentially toxic lipid metabolites. This chain is Putative monoglyceride lipase (mgl1), found in Schizosaccharomyces pombe (strain 972 / ATCC 24843) (Fission yeast).